A 510-amino-acid polypeptide reads, in one-letter code: Cobyric acid synthase (510 aa).

In terms of domain architecture, GATase cobBQ-type spans 249 to 458; it reads CFKVRVLVYP…LHGLFDSPDA (210 aa). Cys336 (nucleophile) is an active-site residue. His450 is an active-site residue.

This sequence belongs to the CobB/CobQ family. CobQ subfamily.

It participates in cofactor biosynthesis; adenosylcobalamin biosynthesis. Catalyzes amidations at positions B, D, E, and G on adenosylcobyrinic A,C-diamide. NH(2) groups are provided by glutamine, and one molecule of ATP is hydrogenolyzed for each amidation. The chain is Cobyric acid synthase from Shewanella oneidensis (strain ATCC 700550 / JCM 31522 / CIP 106686 / LMG 19005 / NCIMB 14063 / MR-1).